The sequence spans 65 residues: UPF0434 protein IL1511 (65 aa).

Belongs to the UPF0434 family.

In Idiomarina loihiensis (strain ATCC BAA-735 / DSM 15497 / L2-TR), this protein is UPF0434 protein IL1511.